Consider the following 197-residue polypeptide: uncharacterized protein (197 aa).

4 helical membrane-spanning segments follow: residues 30–50, 61–81, 101–121, and 130–150; these read WVAM…VEMA, LVAG…PPLV, LWSV…LGLA, and IGEF…VAML.

It is found in the cell membrane. This is an uncharacterized protein from Mycobacterium tuberculosis (strain CDC 1551 / Oshkosh).